The sequence spans 559 residues: Formate--tetrahydrofolate ligase (559 aa).

Thr68–Thr75 contacts ATP.

The protein belongs to the formate--tetrahydrofolate ligase family.

It carries out the reaction (6S)-5,6,7,8-tetrahydrofolate + formate + ATP = (6R)-10-formyltetrahydrofolate + ADP + phosphate. It participates in one-carbon metabolism; tetrahydrofolate interconversion. This is Formate--tetrahydrofolate ligase from Rhizobium rhizogenes (strain K84 / ATCC BAA-868) (Agrobacterium radiobacter).